The primary structure comprises 104 residues: 2,4-dinitrotoluene dioxygenase system, ferredoxin component (104 aa).

Positions 1-21 are disordered; the sequence is MSENWIDAAARDEVPRGRRDR. Residues 5-101 enclose the Rieske domain; sequence WIDAAARDEV…VKIENMRVML (97 aa). Residues cysteine 45, histidine 47, cysteine 64, and histidine 67 each contribute to the [2Fe-2S] cluster site.

Belongs to the bacterial ring-hydroxylating dioxygenase ferredoxin component family. The 2,4-dinitrotoluene dioxygenase (DNTDO) multicomponent enzyme system is composed of an electron transfer component and a dioxygenase component (iron sulfur protein (ISP)). The electron transfer component is composed of a ferredoxin reductase (DntAa) and a ferredoxin (DntAb), and the dioxygenase component is formed of a large alpha subunit (DntAc) and a small beta subunit (DntAd). Requires [2Fe-2S] cluster as cofactor.

Functionally, component of the 2,4-dinitrotoluene dioxygenase (DNTDO) multicomponent enzyme system which catalyzes the incorporation of both atoms of molecular oxygen into 2,4-dinitrotoluene (DNT) to form 4-methyl-5-nitrocatechol (MNC) and nitrite. Functions as an intermediate electron transfer protein via a specific interaction with iron sulfur protein components (ISP)(DntAc and DntAd). Also able to convert naphthalene to cis-(1R,2S)-dihydroxy-1,2-dihydronaphthalene. The sequence is that of 2,4-dinitrotoluene dioxygenase system, ferredoxin component from Burkholderia sp. (strain RASC).